The sequence spans 343 residues: Protein-glutamate methylesterase/protein-glutamine glutaminase 2 (343 aa).

Residues 5–122 enclose the Response regulatory domain; it reads KVLVVDDSAI…SVGDMSGQLV (118 aa). The residue at position 56 (Asp-56) is a 4-aspartylphosphate. The CheB-type methylesterase domain occupies 154–343; the sequence is AETSNKVIAI…SIADEIVRMV (190 aa). Active-site residues include Ser-166, His-192, and Asp-288.

It belongs to the CheB family. Post-translationally, phosphorylated by CheA. Phosphorylation of the N-terminal regulatory domain activates the methylesterase activity.

It is found in the cytoplasm. It carries out the reaction [protein]-L-glutamate 5-O-methyl ester + H2O = L-glutamyl-[protein] + methanol + H(+). The catalysed reaction is L-glutaminyl-[protein] + H2O = L-glutamyl-[protein] + NH4(+). Functionally, involved in chemotaxis. Part of a chemotaxis signal transduction system that modulates chemotaxis in response to various stimuli. Catalyzes the demethylation of specific methylglutamate residues introduced into the chemoreceptors (methyl-accepting chemotaxis proteins or MCP) by CheR. Also mediates the irreversible deamidation of specific glutamine residues to glutamic acid. The chain is Protein-glutamate methylesterase/protein-glutamine glutaminase 2 from Syntrophus aciditrophicus (strain SB).